The following is a 505-amino-acid chain: Deoxyguanosinetriphosphate triphosphohydrolase (505 aa).

One can recognise an HD domain in the interval 66–273 (RLTHSMEVQQ…MEAADDISYC (208 aa)).

Belongs to the dGTPase family. Type 1 subfamily. As to quaternary structure, homotetramer. Requires Mg(2+) as cofactor.

The catalysed reaction is dGTP + H2O = 2'-deoxyguanosine + triphosphate + H(+). In terms of biological role, dGTPase preferentially hydrolyzes dGTP over the other canonical NTPs. The protein is Deoxyguanosinetriphosphate triphosphohydrolase of Escherichia coli O157:H7.